A 507-amino-acid polypeptide reads, in one-letter code: Major capsid protein L1 (507 aa).

The segment at 120-147 is disordered; it reads GHPLFNKLRDTENNSSYQGGSTDDRQNT. Residues 132–147 show a composition bias toward polar residues; sequence NNSSYQGGSTDDRQNT.

It belongs to the papillomaviridae L1 protein family. Self-assembles into homopentamers. The capsid has an icosahedral symmetry and consists of 72 capsomers, with each capsomer being a pentamer of L1. Interacts with the minor capsid protein L2; this interaction is necessary for viral genome encapsidation. Interacts with protein E2; this interaction enhances E2-dependent replication and transcription activation.

Its subcellular location is the virion. It localises to the host nucleus. In terms of biological role, forms an icosahedral capsid with a T=7 symmetry and a 50 nm diameter. The capsid is composed of 72 pentamers linked to each other by disulfide bonds and associated with L2 proteins. Binds to heparan sulfate proteoglycans on cell surface of basal layer keratinocytes to provide initial virion attachment. This binding mediates a conformational change in the virus capsid that facilitates efficient infection. The virion enters the host cell via endocytosis. During virus trafficking, L1 protein dissociates from the viral DNA and the genomic DNA is released to the host nucleus. The virion assembly takes place within the cell nucleus. Encapsulates the genomic DNA together with protein L2. The sequence is that of Major capsid protein L1 from Homo sapiens (Human).